A 592-amino-acid polypeptide reads, in one-letter code: Aspartate--tRNA(Asp/Asn) ligase (592 aa).

L-aspartate is bound at residue glutamate 177. The aspartate stretch occupies residues 201 to 204; sequence QIFK. 2 residues coordinate L-aspartate: arginine 223 and histidine 452. 223–225 is an ATP binding site; the sequence is RDE. ATP is bound at residue glutamate 486. Arginine 493 lines the L-aspartate pocket. Residue 538–541 coordinates ATP; it reads GIDR.

This sequence belongs to the class-II aminoacyl-tRNA synthetase family. Type 1 subfamily. Homodimer.

The protein localises to the cytoplasm. It carries out the reaction tRNA(Asx) + L-aspartate + ATP = L-aspartyl-tRNA(Asx) + AMP + diphosphate. Aspartyl-tRNA synthetase with relaxed tRNA specificity since it is able to aspartylate not only its cognate tRNA(Asp) but also tRNA(Asn). Reaction proceeds in two steps: L-aspartate is first activated by ATP to form Asp-AMP and then transferred to the acceptor end of tRNA(Asp/Asn). In Anaplasma marginale (strain Florida), this protein is Aspartate--tRNA(Asp/Asn) ligase.